The primary structure comprises 293 residues: 4-diphosphocytidyl-2-C-methyl-D-erythritol kinase (293 aa).

Lysine 10 is a catalytic residue. 96–106 serves as a coordination point for ATP; it reads PIAAGLGGGSS. Aspartate 138 is an active-site residue.

This sequence belongs to the GHMP kinase family. IspE subfamily.

It catalyses the reaction 4-CDP-2-C-methyl-D-erythritol + ATP = 4-CDP-2-C-methyl-D-erythritol 2-phosphate + ADP + H(+). It functions in the pathway isoprenoid biosynthesis; isopentenyl diphosphate biosynthesis via DXP pathway; isopentenyl diphosphate from 1-deoxy-D-xylulose 5-phosphate: step 3/6. In terms of biological role, catalyzes the phosphorylation of the position 2 hydroxy group of 4-diphosphocytidyl-2C-methyl-D-erythritol. This is 4-diphosphocytidyl-2-C-methyl-D-erythritol kinase from Caulobacter sp. (strain K31).